We begin with the raw amino-acid sequence, 139 residues long: Cellular retinoic acid-binding protein 2 (139 aa).

The Nuclear localization signal signature appears at 21-31 (KALGVNMMMRK). K103 is covalently cross-linked (Glycyl lysine isopeptide (Lys-Gly) (interchain with G-Cter in SUMO)). All-trans-retinoate is bound at residue 134–136 (RVY).

The protein belongs to the calycin superfamily. Fatty-acid binding protein (FABP) family. As to quaternary structure, interacts with importin alpha, RXR and RARA. In terms of processing, sumoylated in response to retinoic acid binding, sumoylation is critical for dissociation from ER and subsequent nuclear translocation.

The protein localises to the cytoplasm. It localises to the endoplasmic reticulum. Its subcellular location is the nucleus. Functionally, transports retinoic acid to the nucleus. Regulates the access of retinoic acid to the nuclear retinoic acid receptors. The sequence is that of Cellular retinoic acid-binding protein 2 (Crabp2) from Rattus norvegicus (Rat).